A 797-amino-acid chain; its full sequence is Inulosucrase (797 aa).

The signal sequence occupies residues 1-36 (MLENKNHKKISLSGKSLLMGTLSTAAIVLSASTANA). Residues 54–64 (ASSVNNENNKQ) are compositionally biased toward polar residues. Residues 54-176 (ASSVNNENNK…SVKPAENATK (123 aa)) are disordered. Composition is skewed to basic and acidic residues over residues 65 to 75 (VTEKDSADKST) and 82 to 95 (ANTK…ETTE). The segment covering 130 to 139 (DQKTTNAATT) has biased composition (low complexity). Over residues 140-167 (DTKKDDVKQVEKKDSVDKTNAEENKDSS) the composition is skewed to basic and acidic residues. Trp271 serves as a coordination point for substrate. Catalysis depends on Asp272, which acts as the Nucleophile. Asn317 contacts Ca(2+). Position 340 (Ser340) interacts with substrate. Asp419 contributes to the Ca(2+) binding site. Residue 424 to 425 (RD) coordinates substrate. Positions 450, 487, 489, and 521 each coordinate Ca(2+). Substrate-binding positions include 522 to 524 (EIE) and Arg542. The Proton donor/acceptor role is filled by Glu524. Residues Asp660, Ile662, and Ser667 each contribute to the Ca(2+) site. The segment at 708-766 (QPVTPIPNVPTTPETPTTPDKPEVPTTPEVPTTPETPTPEAPKNPVKKTSQSKLPKAGD) is disordered. Residues 718–740 (TTPETPTTPDKPEVPTTPEVPTT) are compositionally biased toward low complexity. The short motif at 761-765 (LPKAG) is the LPXTG sorting signal element. Pentaglycyl murein peptidoglycan amidated alanine is present on Ala764. Positions 765 to 797 (GDKNSFAAVVLGAVSSILGAVGLTGVSKRKRNN) are cleaved as a propeptide — removed by sortase.

The protein belongs to the glycosyl hydrolase 68 family. The cofactor is Ca(2+).

Its subcellular location is the secreted. The protein resides in the cell wall. It carries out the reaction [(2-&gt;1)-beta-D-fructosyl](n) + sucrose = [(2-&gt;1)-beta-D-fructosyl](n+1) + D-glucose. In terms of biological role, fructosyltransferase that catalyzes the polymerization of the fructose moiety of sucrose to produce inulin polymer and inulin oligosaccharides such as 1-kestose and nystose. This Lactobacillus johnsonii (strain CNCM I-12250 / La1 / NCC 533) protein is Inulosucrase.